The chain runs to 398 residues: Acetate kinase (398 aa).

Residue asparagine 7 participates in Mg(2+) binding. Lysine 14 provides a ligand contact to ATP. Arginine 91 contributes to the substrate binding site. Catalysis depends on aspartate 148, which acts as the Proton donor/acceptor. Residues 208–212 (HIGNG), 283–285 (DMR), and 331–335 (GVGEN) each bind ATP. Glutamate 384 contacts Mg(2+).

This sequence belongs to the acetokinase family. Homodimer. Mg(2+) serves as cofactor. The cofactor is Mn(2+).

It localises to the cytoplasm. The catalysed reaction is acetate + ATP = acetyl phosphate + ADP. Its pathway is metabolic intermediate biosynthesis; acetyl-CoA biosynthesis; acetyl-CoA from acetate: step 1/2. Its function is as follows. Catalyzes the formation of acetyl phosphate from acetate and ATP. Can also catalyze the reverse reaction. The polypeptide is Acetate kinase (Bacteroides fragilis (strain ATCC 25285 / DSM 2151 / CCUG 4856 / JCM 11019 / LMG 10263 / NCTC 9343 / Onslow / VPI 2553 / EN-2)).